The following is a 102-amino-acid chain: Small ribosomal subunit protein uS10 (102 aa).

It belongs to the universal ribosomal protein uS10 family. Part of the 30S ribosomal subunit.

In terms of biological role, involved in the binding of tRNA to the ribosomes. This chain is Small ribosomal subunit protein uS10, found in Rhizobium meliloti (strain 1021) (Ensifer meliloti).